We begin with the raw amino-acid sequence, 583 residues long: Asparagine synthetase, root [glutamine-hydrolyzing] (583 aa).

C2 serves as the catalytic For GATase activity. The 184-residue stretch at 2–185 (CGILAVLGCS…PGHLYSSKDS (184 aa)) folds into the Glutamine amidotransferase type-2 domain. L-glutamine is bound by residues 50–54 (RLAIV), 75–77 (NGE), and D98. ATP is bound by residues L231, V267, and 341–342 (SG). In terms of domain architecture, Asparagine synthetase spans 237-516 (DSSLVASITS…PQNSARLTVP (280 aa)).

As to expression, roots.

It catalyses the reaction L-aspartate + L-glutamine + ATP + H2O = L-asparagine + L-glutamate + AMP + diphosphate + H(+). Its pathway is amino-acid biosynthesis; L-asparagine biosynthesis; L-asparagine from L-aspartate (L-Gln route): step 1/1. The sequence is that of Asparagine synthetase, root [glutamine-hydrolyzing] (AS2) from Pisum sativum (Garden pea).